The following is a 286-amino-acid chain: ATP synthase gamma chain (286 aa).

It belongs to the ATPase gamma chain family. As to quaternary structure, F-type ATPases have 2 components, CF(1) - the catalytic core - and CF(0) - the membrane proton channel. CF(1) has five subunits: alpha(3), beta(3), gamma(1), delta(1), epsilon(1). CF(0) has three main subunits: a, b and c.

Its subcellular location is the cell inner membrane. In terms of biological role, produces ATP from ADP in the presence of a proton gradient across the membrane. The gamma chain is believed to be important in regulating ATPase activity and the flow of protons through the CF(0) complex. The sequence is that of ATP synthase gamma chain from Solibacter usitatus (strain Ellin6076).